Reading from the N-terminus, the 267-residue chain is 5'-nucleotidase SurE (267 aa).

A divalent metal cation contacts are provided by D9, D10, S40, and N97.

This sequence belongs to the SurE nucleotidase family. It depends on a divalent metal cation as a cofactor.

The protein resides in the cytoplasm. The catalysed reaction is a ribonucleoside 5'-phosphate + H2O = a ribonucleoside + phosphate. In terms of biological role, nucleotidase that shows phosphatase activity on nucleoside 5'-monophosphates. This chain is 5'-nucleotidase SurE, found in Helicobacter pylori (strain P12).